The primary structure comprises 236 residues: 7-cyano-7-deazaguanine synthase (236 aa).

Residue 7–17 participates in ATP binding; it reads CSGGLDSVSLA. The Zn(2+) site is built by cysteine 185, cysteine 193, cysteine 196, and cysteine 199.

It belongs to the QueC family. Requires Zn(2+) as cofactor.

The catalysed reaction is 7-carboxy-7-deazaguanine + NH4(+) + ATP = 7-cyano-7-deazaguanine + ADP + phosphate + H2O + H(+). Its pathway is purine metabolism; 7-cyano-7-deazaguanine biosynthesis. Its function is as follows. Catalyzes the ATP-dependent conversion of 7-carboxy-7-deazaguanine (CDG) to 7-cyano-7-deazaguanine (preQ(0)). This is 7-cyano-7-deazaguanine synthase from Rhizobium meliloti (strain 1021) (Ensifer meliloti).